We begin with the raw amino-acid sequence, 606 residues long: Scavenger receptor class A member 3 (606 aa).

The Cytoplasmic portion of the chain corresponds to 1 to 56 (MKVRSAGGDGDALCVTEEDLAGDDEDMPTFPCTQKGRPGPRCSRCQKNLSLHTSVR). Residues 57-77 (ILYLFLALLLVAVAVLASLVF) form a helical; Signal-anchor for type II membrane protein membrane-spanning segment. Over 78–606 (RKVDSLSEDI…PGPPGSQSFY (529 aa)) the chain is Extracellular. Asn-115, Asn-182, Asn-224, Asn-257, Asn-313, Asn-337, Asn-365, Asn-400, Asn-430, and Asn-451 each carry an N-linked (GlcNAc...) asparagine glycan. Residues 454-606 (ILRGAPGPPG…PGPPGSQSFY (153 aa)) are disordered. Residues 455-513 (LRGAPGPPGPRGFKGDMGVKGPVGGRGPKGDPGSLGPLGPQGPQGQPGEAGPVGERGPV) form the Collagen-like 1 domain. Residues 485 to 519 (DPGSLGPLGPQGPQGQPGEAGPVGERGPVGPRGFP) are compositionally biased toward low complexity. Residues 526–535 (GSFGTGGPRG) show a composition bias toward gly residues. Residues 544–603 (GPPGPEGPPGSPGPSGPQGKPGIAGKTGSPGQRGAMGPKGEPGIQGPPGLPGPPGPPGSQ) enclose the Collagen-like 2 domain. Composition is skewed to pro residues over residues 545–558 (PPGP…PGPS) and 591–600 (PGLPGPPGPP).

Expressed ubiquitously.

Its subcellular location is the endoplasmic reticulum membrane. It is found in the golgi apparatus membrane. Seems to protect cells by scavenging oxidative molecules or harmful products of oxidation. In Homo sapiens (Human), this protein is Scavenger receptor class A member 3 (SCARA3).